Consider the following 301-residue polypeptide: ATP synthase gamma chain (301 aa).

It belongs to the ATPase gamma chain family. In terms of assembly, F-type ATPases have 2 components, CF(1) - the catalytic core - and CF(0) - the membrane proton channel. CF(1) has five subunits: alpha(3), beta(3), gamma(1), delta(1), epsilon(1). CF(0) has three main subunits: a, b and c.

It localises to the cell inner membrane. In terms of biological role, produces ATP from ADP in the presence of a proton gradient across the membrane. The gamma chain is believed to be important in regulating ATPase activity and the flow of protons through the CF(0) complex. In Bordetella avium (strain 197N), this protein is ATP synthase gamma chain.